The sequence spans 123 residues: Large ribosomal subunit protein uL14c (123 aa).

It belongs to the universal ribosomal protein uL14 family. Part of the 50S ribosomal subunit.

The protein resides in the plastid. It localises to the chloroplast. Binds to 23S rRNA. The sequence is that of Large ribosomal subunit protein uL14c from Lolium perenne (Perennial ryegrass).